A 64-amino-acid polypeptide reads, in one-letter code: Antimicrobial peptide THP2 (64 aa).

The N-terminal stretch at 1-28 (MRILYLLFSLLFLALQVSPGLSSPKRDM) is a signal peptide. 3 disulfide bridges follow: C31/C57, C36/C51, and C41/C58.

As to expression, expressed in circulating heterophil granulocytes and bone marrow (at protein level).

The protein resides in the secreted. Antibacterial activity against the Gram-positive bacterium Staphylococcus aureus. Lacks antibacterial activity against the Gram-negative bacterium E.coli K-12. The polypeptide is Antimicrobial peptide THP2 (Meleagris gallopavo (Wild turkey)).